Here is a 377-residue protein sequence, read N- to C-terminus: Palmitoyltransferase ZDHHC16 (377 aa).

Residues 1–79 are Cytoplasmic-facing; the sequence is MRGQWSLLLG…WLVDNVIRWC (79 aa). The chain crosses the membrane as a helical span at residues 80-100; that stretch reads GVVFVVLVIVLTSSIVAIAYL. Residues 101–116 lie on the Lumenal side of the membrane; it reads CVLPLILQTYSVPRLC. The helical transmembrane segment at 117–137 threads the bilayer; that stretch reads WHFFYSHWNLILIVFHYYQAI. Residues 138 to 198 lie on the Cytoplasmic side of the membrane; the sequence is TTPPGYPPQG…NNCVGHYNHR (61 aa). The region spanning 155-205 is the DHHC domain; that stretch reads SICKKCINPKPARTHHCSICNRCVLKMDHHCPWLNNCVGHYNHRYFFSFCF. The S-palmitoyl cysteine intermediate role is filled by Cys185. Residues 199–219 form a helical membrane-spanning segment; the sequence is YFFSFCFFMTLGCVYCSYGSW. Residues 220–266 lie on the Lumenal side of the membrane; the sequence is DLFREAYAAIEKMKQLDKNKLQAVANQTYHQTPPPTFSFRERVTHKS. The chain crosses the membrane as a helical span at residues 267-287; that stretch reads LVYLWFLCSSVALALGALTIW. Over 288 to 377 the chain is Cytoplasmic; the sequence is HAVLISRGET…TAHSASVMAV (90 aa).

It belongs to the DHHC palmitoyltransferase family. Interacts with ABL1. Interacts with COPS5/JAB1.

Its subcellular location is the endoplasmic reticulum membrane. It carries out the reaction L-cysteinyl-[protein] + hexadecanoyl-CoA = S-hexadecanoyl-L-cysteinyl-[protein] + CoA. Its function is as follows. Palmitoyl acyltransferase that mediates palmitoylation of proteins such as PLN and ZDHHC6. Required during embryonic heart development and cardiac function, possibly by mediating palmitoylation of PLN, thereby affecting PLN phosphorylation and homooligomerization. Also required for eye development. Palmitoylates ZDHHC6, affecting the quaternary assembly of ZDHHC6, its localization, stability and function. May play a role in DNA damage response. May be involved in apoptosis regulation. Involved in the proliferation of neural stem cells by regulating the FGF/ERK pathway. The protein is Palmitoyltransferase ZDHHC16 of Bos taurus (Bovine).